Reading from the N-terminus, the 269-residue chain is Interleukin-1 beta (269 aa).

A propeptide spanning residues 1–112 (MAMVPEITCD…EEPITFKNCD (112 aa)) is cleaved from the precursor.

The protein belongs to the IL-1 family. As to quaternary structure, monomer. In its precursor form, weakly interacts with full-length MEFV; the mature cytokine does not interact at all. Interacts with integrins ITGAV:ITGBV and ITGA5:ITGB1; integrin-binding is required for IL1B signaling. Interacts with cargo receptor TMED10; the interaction is direct and is required for the secretion of IL1B mature form. Interacts with HSP90AB1; the interaction facilitates cargo translocation into the ERGIC. Interacts with HSP90B1; the interaction facilitates cargo translocation into the ERGIC.

Its subcellular location is the cytoplasm. The protein localises to the cytosol. It localises to the secreted. It is found in the lysosome. The protein resides in the extracellular exosome. In terms of biological role, potent pro-inflammatory cytokine. Initially discovered as the major endogenous pyrogen, induces prostaglandin synthesis, neutrophil influx and activation, T-cell activation and cytokine production, B-cell activation and antibody production, and fibroblast proliferation and collagen production. Promotes Th17 differentiation of T-cells. Synergizes with IL12/interleukin-12 to induce IFNG synthesis from T-helper 1 (Th1) cells. Plays a role in angiogenesis by inducing VEGF production synergistically with TNF and IL6. Involved in transduction of inflammation downstream of pyroptosis: its mature form is specifically released in the extracellular milieu by passing through the gasdermin-D (GSDMD) pore. The chain is Interleukin-1 beta (IL1B) from Trichosurus vulpecula (Brush-tailed possum).